Reading from the N-terminus, the 262-residue chain is Pyridoxine 5'-phosphate synthase (262 aa).

Asn6 lines the 3-amino-2-oxopropyl phosphate pocket. 8-9 serves as a coordination point for 1-deoxy-D-xylulose 5-phosphate; sequence DH. 3-amino-2-oxopropyl phosphate is bound at residue Arg17. Residue His42 is the Proton acceptor of the active site. 1-deoxy-D-xylulose 5-phosphate-binding residues include Arg44 and His49. Glu69 functions as the Proton acceptor in the catalytic mechanism. A 1-deoxy-D-xylulose 5-phosphate-binding site is contributed by Thr99. The active-site Proton donor is His213. 3-amino-2-oxopropyl phosphate is bound by residues Gly214 and 235 to 236; that span reads GH.

Belongs to the PNP synthase family. In terms of assembly, homooctamer; tetramer of dimers.

Its subcellular location is the cytoplasm. It catalyses the reaction 3-amino-2-oxopropyl phosphate + 1-deoxy-D-xylulose 5-phosphate = pyridoxine 5'-phosphate + phosphate + 2 H2O + H(+). It functions in the pathway cofactor biosynthesis; pyridoxine 5'-phosphate biosynthesis; pyridoxine 5'-phosphate from D-erythrose 4-phosphate: step 5/5. Catalyzes the complicated ring closure reaction between the two acyclic compounds 1-deoxy-D-xylulose-5-phosphate (DXP) and 3-amino-2-oxopropyl phosphate (1-amino-acetone-3-phosphate or AAP) to form pyridoxine 5'-phosphate (PNP) and inorganic phosphate. The protein is Pyridoxine 5'-phosphate synthase of Wolinella succinogenes (strain ATCC 29543 / DSM 1740 / CCUG 13145 / JCM 31913 / LMG 7466 / NCTC 11488 / FDC 602W) (Vibrio succinogenes).